The primary structure comprises 419 residues: Tyrosine--tRNA ligase (419 aa).

Tyrosine 34 serves as a coordination point for L-tyrosine. The 'HIGH' region signature appears at 39–48; the sequence is PTADSLHLGN. L-tyrosine contacts are provided by tyrosine 169 and glutamine 173. The 'KMSKS' region signature appears at 229 to 233; that stretch reads KFGKS. Lysine 232 is a binding site for ATP. An S4 RNA-binding domain is found at 353–419; the sequence is LTLIELLISA…GKKKNFVLTY (67 aa).

It belongs to the class-I aminoacyl-tRNA synthetase family. TyrS type 1 subfamily. In terms of assembly, homodimer.

The protein localises to the cytoplasm. The catalysed reaction is tRNA(Tyr) + L-tyrosine + ATP = L-tyrosyl-tRNA(Tyr) + AMP + diphosphate + H(+). In terms of biological role, catalyzes the attachment of tyrosine to tRNA(Tyr) in a two-step reaction: tyrosine is first activated by ATP to form Tyr-AMP and then transferred to the acceptor end of tRNA(Tyr). In Lactococcus lactis subsp. cremoris (strain SK11), this protein is Tyrosine--tRNA ligase.